The chain runs to 472 residues: UDP-N-acetylmuramate--L-alanine ligase (472 aa).

Gly122–Thr128 lines the ATP pocket.

The protein belongs to the MurCDEF family.

The protein resides in the cytoplasm. The catalysed reaction is UDP-N-acetyl-alpha-D-muramate + L-alanine + ATP = UDP-N-acetyl-alpha-D-muramoyl-L-alanine + ADP + phosphate + H(+). The protein operates within cell wall biogenesis; peptidoglycan biosynthesis. In terms of biological role, cell wall formation. The protein is UDP-N-acetylmuramate--L-alanine ligase of Myxococcus xanthus (strain DK1622).